Reading from the N-terminus, the 650-residue chain is Amyloid beta precursor like protein 1 (650 aa).

Positions 1–38 (MGPASPAARGLSRRPGQPPLPLLLPLLLLLLRAQPAIG) are cleaved as a signal peptide. Topologically, residues 39 to 580 (SLAGGSPGAA…APAGTGVSRE (542 aa)) are extracellular. The GFLD subdomain stretch occupies residues 50–146 (APGSAQVAGL…PFRCLPGEFV (97 aa)). One can recognise an E1 domain in the interval 50-212 (APGSAQVAGL…RGVEYVCCPP (163 aa)). Intrachain disulfides connect Cys60–Cys84, Cys95–Cys140, Cys120–Cys128, Cys156–Cys210, Cys167–Cys197, and Cys181–Cys209. Residues 154 to 212 (EGCRFLHQERMDQCESSTRRHQEAQEACSSQGLILHGSGMLLPCGSDRFRGVEYVCCPP) form a cuBD subdomain region. His174 lines the Cu(2+) pocket. Zn(2+)-binding residues include Glu206, Cys209, and Cys210. Positions 214 to 287 (GTPDPSGTAV…LAVVGKVTPT (74 aa)) are disordered. O-linked (GalNAc...) threonine glycosylation occurs at Thr215. O-linked (GalNAc...) serine glycosylation occurs at Ser227. O-linked (GalNAc...) threonine glycosylation occurs at Thr228. Residues 285–305 (TPTPRPTDGVDIYFGMPGEIS) are O-glycosylated at three sites. The E2 domain maps to 293–484 (GVDIYFGMPG…QELRPQIQEL (192 aa)). Heparin-binding stretches follow at residues 310 to 342 (FLRAKMDLEERRMRQINEVMREWAMADNQSKNL) and 410 to 441 (LLALRRYLRAEQKEQRHTLRHYQHVAAVDPEK). A glycan (N-linked (GlcNAc...) asparagine) is linked at Asn337. The segment at 442–459 (AQQMRFQVHTHLQVIEER) is collagen-binding. Asn461 carries an N-linked (GlcNAc...) asparagine glycan. The segment at 492–546 (PSELEAPAPGGSSEDKGGLQPPDSKDDTPMTLPKGSTEQDAASPEKEKMNPLEQY) is disordered. 2 stretches are compositionally biased toward basic and acidic residues: residues 504-519 (SEDKGGLQPPDSKDDT) and 534-546 (SPEKEKMNPLEQY). A glycan (N-linked (GlcNAc...) asparagine) is linked at Asn551. Residue His561 participates in Cu(2+) binding. His561 is a Zn(2+) binding site. The chain crosses the membrane as a helical span at residues 581–603 (AVSGLLIMGAGGGSLIVLSMLLL). The Basolateral sorting signal signature appears at 604-615 (RRKKPYGAISHG). Over 604–650 (RRKKPYGAISHGVVEVDPMLTLEEQQLRELQRHGYENPTYRFLEERP) the chain is Cytoplasmic. Residues 632-649 (ELQRHGYENPTYRFLEER) form an interaction with DAB1 region. The segment at 636 to 650 (HGYENPTYRFLEERP) is interaction with DAB2. Positions 640–643 (NPTY) match the Clathrin-binding motif. The NPXY motif; contains endocytosis signal motif lies at 640–643 (NPTY).

The protein belongs to the APP family. Monomer and homodimer. Heparin binding promotes homodimerization. Binds, via its C-terminus, to the PID domain of several cytoplasmic proteins, including APBB and APBA family members, MAPK8IP1 and DAB1. Binding to Dab1 inhibits its serine phosphorylation. Interacts with CPEB1. Interacts (via NPXY motif) with DAB2 (via PID domain); the interaction is impaired by tyrosine phosphorylation of the NPXY motif. Interacts (via NPXY motif) with DAB1. In terms of processing, proteolytically cleaved by caspases during neuronal apoptosis. Cleaved, in vitro, at Asp-620 by caspase-3. N- and O-glycosylated. O-glycosylation with core 1 or possibly core 8 glycans. Glycosylation on Ser-227 is the preferred site to Thr-228. Expressed in the cerebral cortex where it is localized to the postsynaptic density (PSD).

The protein resides in the cell membrane. The protein localises to the cytoplasm. Its function is as follows. May play a role in postsynaptic function. The C-terminal gamma-secretase processed fragment, ALID1, activates transcription activation through APBB1 (Fe65) binding. Couples to JIP signal transduction through C-terminal binding. May interact with cellular G-protein signaling pathways. Can regulate neurite outgrowth through binding to components of the extracellular matrix such as heparin and collagen I. The gamma-CTF peptide, C30, is a potent enhancer of neuronal apoptosis. In Homo sapiens (Human), this protein is Amyloid beta precursor like protein 1 (APLP1).